The primary structure comprises 365 residues: tRNA/tmRNA (uracil-C(5))-methyltransferase (365 aa).

S-adenosyl-L-methionine-binding residues include Gln189, Tyr217, Asn222, Glu238, and Asp298. The Nucleophile role is filled by Cys323. The active-site Proton acceptor is Glu357.

This sequence belongs to the class I-like SAM-binding methyltransferase superfamily. RNA M5U methyltransferase family. TrmA subfamily.

It carries out the reaction uridine(54) in tRNA + S-adenosyl-L-methionine = 5-methyluridine(54) in tRNA + S-adenosyl-L-homocysteine + H(+). The enzyme catalyses uridine(341) in tmRNA + S-adenosyl-L-methionine = 5-methyluridine(341) in tmRNA + S-adenosyl-L-homocysteine + H(+). Functionally, dual-specificity methyltransferase that catalyzes the formation of 5-methyluridine at position 54 (m5U54) in all tRNAs, and that of position 341 (m5U341) in tmRNA (transfer-mRNA). The sequence is that of tRNA/tmRNA (uracil-C(5))-methyltransferase from Pasteurella multocida (strain Pm70).